Reading from the N-terminus, the 263-residue chain is Urease accessory protein UreD 1 (263 aa).

It belongs to the UreD family. UreD, UreF and UreG form a complex that acts as a GTP-hydrolysis-dependent molecular chaperone, activating the urease apoprotein by helping to assemble the nickel containing metallocenter of UreC. The UreE protein probably delivers the nickel.

It is found in the cytoplasm. Functionally, required for maturation of urease via the functional incorporation of the urease nickel metallocenter. The sequence is that of Urease accessory protein UreD 1 from Synechococcus sp. (strain JA-3-3Ab) (Cyanobacteria bacterium Yellowstone A-Prime).